The following is a 284-amino-acid chain: Pantothenate synthetase (284 aa).

30–37 is a binding site for ATP; the sequence is MGNLHDGH. H37 functions as the Proton donor in the catalytic mechanism. Residue Q61 coordinates (R)-pantoate. Q61 is a binding site for beta-alanine. 149-152 contacts ATP; sequence GEKD. (R)-pantoate is bound at residue Q155. ATP-binding positions include V178 and 186–189; that span reads LSSR.

Belongs to the pantothenate synthetase family. In terms of assembly, homodimer.

It localises to the cytoplasm. It carries out the reaction (R)-pantoate + beta-alanine + ATP = (R)-pantothenate + AMP + diphosphate + H(+). The protein operates within cofactor biosynthesis; (R)-pantothenate biosynthesis; (R)-pantothenate from (R)-pantoate and beta-alanine: step 1/1. Its function is as follows. Catalyzes the condensation of pantoate with beta-alanine in an ATP-dependent reaction via a pantoyl-adenylate intermediate. The polypeptide is Pantothenate synthetase (Klebsiella pneumoniae (strain 342)).